A 582-amino-acid chain; its full sequence is Acylamino-acid-releasing enzyme (582 aa).

Active-site charge relay system residues include S445, D524, and H556.

It belongs to the peptidase S9C family.

The protein resides in the cytoplasm. The catalysed reaction is Cleavage of an N-acetyl or N-formyl amino acid from the N-terminus of a polypeptide.. In terms of biological role, this enzyme catalyzes the hydrolysis of the N-terminal peptide bond of an N-acetylated peptide to generate an N-acetylated amino acid and a peptide with a free N-terminus. The sequence is that of Acylamino-acid-releasing enzyme from Aeropyrum pernix (strain ATCC 700893 / DSM 11879 / JCM 9820 / NBRC 100138 / K1).